We begin with the raw amino-acid sequence, 241 residues long: ATP synthase subunit a (241 aa).

5 helical membrane-spanning segments follow: residues 30-50 (GQVF…ISFG), 91-111 (FIGT…LIPW), 128-148 (INTT…AGLS), 193-213 (LVVG…VMFL), and 214-234 (GLFT…YYIG).

This sequence belongs to the ATPase A chain family. F-type ATPases have 2 components, CF(1) - the catalytic core - and CF(0) - the membrane proton channel. CF(1) has five subunits: alpha(3), beta(3), gamma(1), delta(1), epsilon(1). CF(0) has four main subunits: a, b, b' and c.

It localises to the cellular thylakoid membrane. Its function is as follows. Key component of the proton channel; it plays a direct role in the translocation of protons across the membrane. This Prochlorococcus marinus (strain AS9601) protein is ATP synthase subunit a.